The primary structure comprises 358 residues: Fructose-bisphosphate aldolase class 2 (358 aa).

Ser61 serves as a coordination point for D-glyceraldehyde 3-phosphate. The active-site Proton donor is the Asp109. The Zn(2+) site is built by His110, Asp144, Glu174, and His226. Gly227 provides a ligand contact to dihydroxyacetone phosphate. A Zn(2+)-binding site is contributed by His264. Dihydroxyacetone phosphate-binding positions include 265–267 and 286–289; these read GGS and NIDT.

This sequence belongs to the class II fructose-bisphosphate aldolase family. Zn(2+) serves as cofactor.

The catalysed reaction is beta-D-fructose 1,6-bisphosphate = D-glyceraldehyde 3-phosphate + dihydroxyacetone phosphate. It functions in the pathway carbohydrate degradation; glycolysis; D-glyceraldehyde 3-phosphate and glycerone phosphate from D-glucose: step 4/4. Its function is as follows. Catalyzes the aldol condensation of dihydroxyacetone phosphate (DHAP or glycerone-phosphate) with glyceraldehyde 3-phosphate (G3P) to form fructose 1,6-bisphosphate (FBP) in gluconeogenesis and the reverse reaction in glycolysis. The chain is Fructose-bisphosphate aldolase class 2 (fbaA) from Buchnera aphidicola subsp. Acyrthosiphon pisum (strain APS) (Acyrthosiphon pisum symbiotic bacterium).